An 89-amino-acid chain; its full sequence is Small ribosomal subunit protein uS15 (89 aa).

Belongs to the universal ribosomal protein uS15 family. As to quaternary structure, part of the 30S ribosomal subunit. Forms a bridge to the 50S subunit in the 70S ribosome, contacting the 23S rRNA.

Its function is as follows. One of the primary rRNA binding proteins, it binds directly to 16S rRNA where it helps nucleate assembly of the platform of the 30S subunit by binding and bridging several RNA helices of the 16S rRNA. Forms an intersubunit bridge (bridge B4) with the 23S rRNA of the 50S subunit in the ribosome. This chain is Small ribosomal subunit protein uS15, found in Rhizorhabdus wittichii (strain DSM 6014 / CCUG 31198 / JCM 15750 / NBRC 105917 / EY 4224 / RW1) (Sphingomonas wittichii).